The following is a 305-amino-acid chain: tRNA pseudouridine synthase B (305 aa).

The Nucleophile role is filled by Asp-48.

Belongs to the pseudouridine synthase TruB family. Type 1 subfamily.

The catalysed reaction is uridine(55) in tRNA = pseudouridine(55) in tRNA. Functionally, responsible for synthesis of pseudouridine from uracil-55 in the psi GC loop of transfer RNAs. The sequence is that of tRNA pseudouridine synthase B from Pseudomonas putida (strain ATCC 700007 / DSM 6899 / JCM 31910 / BCRC 17059 / LMG 24140 / F1).